Consider the following 206-residue polypeptide: Small ribosomal subunit protein uS4 (206 aa).

The region spanning 96–156 (GRLDNVVYRM…EKSKKQARIK (61 aa)) is the S4 RNA-binding domain.

It belongs to the universal ribosomal protein uS4 family. Part of the 30S ribosomal subunit. Contacts protein S5. The interaction surface between S4 and S5 is involved in control of translational fidelity.

In terms of biological role, one of the primary rRNA binding proteins, it binds directly to 16S rRNA where it nucleates assembly of the body of the 30S subunit. Functionally, with S5 and S12 plays an important role in translational accuracy. The sequence is that of Small ribosomal subunit protein uS4 from Histophilus somni (strain 129Pt) (Haemophilus somnus).